The primary structure comprises 815 residues: uncharacterized protein (815 aa).

4 disordered regions span residues 123–183 (QSNT…QPST), 249–274 (NVNNNKNNKNQNNNNNNNIENSNNTN), 592–668 (IKQN…NLNS), and 765–815 (NNEE…EEIK). 2 stretches are compositionally biased toward polar residues: residues 135–154 (SIITNSDSPRLIVSDTTSTT) and 174–183 (DSITVLQPST). A compositionally biased stretch (low complexity) spans 595–611 (NGSSSSNNNSKLSSTNS). The segment covering 612–639 (GQTSDNPINSSNGGQSIKKQGSNLSLNR) has biased composition (polar residues). A compositionally biased stretch (low complexity) spans 640-668 (QQSSTKLNNQSNNNNNNNANTTNQNNLNS). The span at 765–782 (NNEEHNNNNKENNNENNK) shows a compositional bias: basic and acidic residues. A compositionally biased stretch (low complexity) spans 783–809 (ENINNNNNIINNNNDNNCNENNNNCNE).

This is an uncharacterized protein from Dictyostelium discoideum (Social amoeba).